We begin with the raw amino-acid sequence, 601 residues long: Aspartate--tRNA ligase (601 aa).

Glutamate 183 provides a ligand contact to L-aspartate. An aspartate region spans residues 207 to 210; that stretch reads QIFK. Arginine 229 contacts L-aspartate. Residues 229–231 and glutamine 238 contribute to the ATP site; that span reads RDE. Histidine 457 contacts L-aspartate. Glutamate 497 contacts ATP. Arginine 504 is a binding site for L-aspartate. An ATP-binding site is contributed by 549–552; that stretch reads GIDR.

It belongs to the class-II aminoacyl-tRNA synthetase family. Type 1 subfamily. Homodimer.

It is found in the cytoplasm. The catalysed reaction is tRNA(Asp) + L-aspartate + ATP = L-aspartyl-tRNA(Asp) + AMP + diphosphate. Functionally, catalyzes the attachment of L-aspartate to tRNA(Asp) in a two-step reaction: L-aspartate is first activated by ATP to form Asp-AMP and then transferred to the acceptor end of tRNA(Asp). This Leptospira interrogans serogroup Icterohaemorrhagiae serovar copenhageni (strain Fiocruz L1-130) protein is Aspartate--tRNA ligase.